The chain runs to 380 residues: Cytochrome b (380 aa).

The next 4 membrane-spanning stretches (helical) occupy residues 33-53 (FGSLLGLCLAAQILTGLFLAM), 77-98 (WLIRSMHANGASFFFICIYLHI), 113-133 (WNIGVILLLLVMMTAFVGYVL), and 178-198 (FFAFHFLFPFVIAAMTMIHLI). Residues His83 and His97 each coordinate heme b. The heme b site is built by His182 and His196. A ubiquinone is bound at residue His201. The next 4 membrane-spanning stretches (helical) occupy residues 226 to 246 (YKDLLGFAILLIALITLALFS), 288 to 308 (LGGVLALLFSILILMLVPVLH), 320 to 340 (FSQFLFWLLVANVAILTWIGG), and 347 to 367 (FIIIGQIASFLYFFIFLILVP).

This sequence belongs to the cytochrome b family. In terms of assembly, the cytochrome bc1 complex contains 3 respiratory subunits (MT-CYB, CYC1 and UQCRFS1), 2 core proteins (UQCRC1 and UQCRC2) and probably 6 low-molecular weight proteins. It depends on heme b as a cofactor.

The protein resides in the mitochondrion inner membrane. Functionally, component of the ubiquinol-cytochrome c reductase complex (complex III or cytochrome b-c1 complex) that is part of the mitochondrial respiratory chain. The b-c1 complex mediates electron transfer from ubiquinol to cytochrome c. Contributes to the generation of a proton gradient across the mitochondrial membrane that is then used for ATP synthesis. In Astronotus ocellatus (Oscar), this protein is Cytochrome b (mt-cyb).